The following is a 358-amino-acid chain: Probable dual-specificity RNA methyltransferase RlmN 1 (358 aa).

A Radical SAM core domain is found at 101 to 326 (MQAGGTLCIS…REKGFYTLLR (226 aa)). A disulfide bridge connects residues cysteine 108 and cysteine 337. 3 residues coordinate [4Fe-4S] cluster: cysteine 115, cysteine 119, and cysteine 122. S-adenosyl-L-methionine contacts are provided by residues 162 to 163 (GE), serine 194, 218 to 220 (SLN), and asparagine 294. Cysteine 337 serves as the catalytic S-methylcysteine intermediate.

The protein belongs to the radical SAM superfamily. RlmN family. [4Fe-4S] cluster is required as a cofactor.

Its subcellular location is the cytoplasm. It carries out the reaction adenosine(2503) in 23S rRNA + 2 reduced [2Fe-2S]-[ferredoxin] + 2 S-adenosyl-L-methionine = 2-methyladenosine(2503) in 23S rRNA + 5'-deoxyadenosine + L-methionine + 2 oxidized [2Fe-2S]-[ferredoxin] + S-adenosyl-L-homocysteine. The catalysed reaction is adenosine(37) in tRNA + 2 reduced [2Fe-2S]-[ferredoxin] + 2 S-adenosyl-L-methionine = 2-methyladenosine(37) in tRNA + 5'-deoxyadenosine + L-methionine + 2 oxidized [2Fe-2S]-[ferredoxin] + S-adenosyl-L-homocysteine. Specifically methylates position 2 of adenine 2503 in 23S rRNA and position 2 of adenine 37 in tRNAs. In Protochlamydia amoebophila (strain UWE25), this protein is Probable dual-specificity RNA methyltransferase RlmN 1.